The following is a 24-amino-acid chain: Small ribosomal subunit protein uS19c (24 aa).

The protein belongs to the universal ribosomal protein uS19 family.

The protein localises to the plastid. The protein resides in the chloroplast. Its function is as follows. Protein S19 forms a complex with S13 that binds strongly to the 16S ribosomal RNA. The chain is Small ribosomal subunit protein uS19c (rps19) from Petunia hybrida (Petunia).